The chain runs to 303 residues: ATP-dependent Clp protease ATP-binding subunit CLPT3, chloroplastic (303 aa).

The N-terminal 37 residues, 1–37, are a transit peptide targeting the chloroplast; it reads MLLANAPHNGCSRLQQVTLLRASGAKLHRKRALTVVA. Disordered regions lie at residues 185–214 and 278–303; these read ASTE…RDSD and RDDN…DEYE.

It belongs to the ClpA/ClpB family.

The protein localises to the plastid. It localises to the chloroplast. Its function is as follows. Accessory protein regulating the assembly of the plastid Clp protease system. The polypeptide is ATP-dependent Clp protease ATP-binding subunit CLPT3, chloroplastic (Chlamydomonas reinhardtii (Chlamydomonas smithii)).